We begin with the raw amino-acid sequence, 103 residues long: Defensin-like protein 268 (103 aa).

The signal sequence occupies residues 1-24 (MARLIFHFVFALILAAYLLSVTDA). Disulfide bonds link Cys44/Cys103, Cys68/Cys87, Cys74/Cys98, and Cys78/Cys100.

Belongs to the DEFL family.

It localises to the secreted. In Arabidopsis thaliana (Mouse-ear cress), this protein is Defensin-like protein 268.